A 374-amino-acid polypeptide reads, in one-letter code: 4-hydroxy-3-methylbut-2-en-1-yl diphosphate synthase (flavodoxin) (374 aa).

Residues C268, C271, C303, and E310 each coordinate [4Fe-4S] cluster.

It belongs to the IspG family. The cofactor is [4Fe-4S] cluster.

It catalyses the reaction (2E)-4-hydroxy-3-methylbut-2-enyl diphosphate + oxidized [flavodoxin] + H2O + 2 H(+) = 2-C-methyl-D-erythritol 2,4-cyclic diphosphate + reduced [flavodoxin]. Its pathway is isoprenoid biosynthesis; isopentenyl diphosphate biosynthesis via DXP pathway; isopentenyl diphosphate from 1-deoxy-D-xylulose 5-phosphate: step 5/6. Converts 2C-methyl-D-erythritol 2,4-cyclodiphosphate (ME-2,4cPP) into 1-hydroxy-2-methyl-2-(E)-butenyl 4-diphosphate. In Geobacillus thermodenitrificans (strain NG80-2), this protein is 4-hydroxy-3-methylbut-2-en-1-yl diphosphate synthase (flavodoxin).